The chain runs to 74 residues: Small ribosomal subunit protein eS28 (74 aa).

It belongs to the eukaryotic ribosomal protein eS28 family.

This chain is Small ribosomal subunit protein eS28, found in Halorubrum lacusprofundi (strain ATCC 49239 / DSM 5036 / JCM 8891 / ACAM 34).